The following is a 363-amino-acid chain: Guanine nucleotide-binding protein alpha-11 subunit (363 aa).

The G-alpha domain maps to 26–363 (KMLKILLLGG…KISMEKVGFM (338 aa)). The tract at residues 29–42 (KILLLGGPECGKST) is G1 motif. GTP-binding positions include 34 to 41 (GGPECGKS), 172 to 178 (LRARVPT), 197 to 201 (DVGGQ), 276 to 279 (NKID), and alanine 335. Mg(2+) contacts are provided by serine 41 and threonine 178. The interval 170 to 178 (DVLRARVPT) is G2 motif. Positions 193–202 (LRMVDVGGQR) are G3 motif. The interval 272-279 (ILFLNKID) is G4 motif. Residues 333-338 (TNATDT) form a G5 motif region.

The protein belongs to the G-alpha family. In terms of assembly, g proteins are composed of 3 units; alpha, beta and gamma. The alpha chain contains the guanine nucleotide binding site. Expressed in ADL and ASH neurons.

In terms of biological role, guanine nucleotide-binding proteins (G proteins) are involved as modulators or transducers in various transmembrane signaling systems. Mediates the transduction of food and serotonin signals, which modulates the avoidance response to the odorant octanol. Has a role in lifespan to promote longevity. This Caenorhabditis elegans protein is Guanine nucleotide-binding protein alpha-11 subunit (gpa-11).